The following is a 350-amino-acid chain: Phosphoribosylformylglycinamidine cyclo-ligase (350 aa).

This sequence belongs to the AIR synthase family.

It localises to the cytoplasm. It catalyses the reaction 2-formamido-N(1)-(5-O-phospho-beta-D-ribosyl)acetamidine + ATP = 5-amino-1-(5-phospho-beta-D-ribosyl)imidazole + ADP + phosphate + H(+). It participates in purine metabolism; IMP biosynthesis via de novo pathway; 5-amino-1-(5-phospho-D-ribosyl)imidazole from N(2)-formyl-N(1)-(5-phospho-D-ribosyl)glycinamide: step 2/2. This is Phosphoribosylformylglycinamidine cyclo-ligase from Cupriavidus taiwanensis (strain DSM 17343 / BCRC 17206 / CCUG 44338 / CIP 107171 / LMG 19424 / R1) (Ralstonia taiwanensis (strain LMG 19424)).